A 342-amino-acid polypeptide reads, in one-letter code: Dysbindin (342 aa).

S11 is modified (phosphoserine). The stretch at 83 to 180 (LSAHWEKKQA…AELDAEHSQK (98 aa)) forms a coiled coil. Positions 243-256 (LMDISDQEALDVFL) match the Nuclear export signal motif. Residues 263 to 342 (NTLLSPISGP…ATLHSDDSDS (80 aa)) form a disordered region. Residues 286 to 305 (PTPSQAPATPPSSSSPGTDP) show a composition bias toward low complexity. Residues S316, S321, and S340 each carry the phosphoserine modification.

This sequence belongs to the dysbindin family. Interacts (via its coiled coil domain) with KXD1. Interacts with CMYA5, PI4K2 and RNF151. Component of the biogenesis of lysosome-related organelles complex 1 (BLOC-1) composed of at least BLOC1S1, BLOC1S2, BLOC1S3, BLOC1S4, BLOC1S5, BLOC1S6, DTNBP1/BLOC1S7 and SNAPIN/BLOC1S8. Interacts directly in the complex with BLOC1S5, BLOC1S6 and SNAPIN/BLOC1S8. The BLOC-1 complex associates with the AP-3 protein complex and membrane protein cargos. This BLOC-1 complex also associates with the BLOC-2 complex in endosomes. Binds to DTNA and DTNB but may not be a physiological binding partner. Interacts with the DNA-dependent protein kinase complex DNA-PK; the interaction phosphorylates DTNBP1 in vitro. Interacts directly in this complex with XRCC5 and XRCC6. Interacts with AP3M1, AP3B2 and TRIM32. Interacts with XPO1; the interaction exports DTNBP1 out of the nucleus. Ubiquitinated by TRIM32. Ubiquitination leads to DTNBP1 degradation.

It is found in the cytoplasm. The protein localises to the cytoplasmic vesicle membrane. It localises to the cytoplasmic vesicle. The protein resides in the secretory vesicle. Its subcellular location is the synaptic vesicle membrane. It is found in the endosome membrane. The protein localises to the melanosome membrane. It localises to the nucleus. The protein resides in the postsynaptic density. Its subcellular location is the presynaptic cell membrane. It is found in the endoplasmic reticulum. Its function is as follows. Component of the BLOC-1 complex, a complex that is required for normal biogenesis of lysosome-related organelles (LRO), such as platelet dense granules and melanosomes. In concert with the AP-3 complex, the BLOC-1 complex is required to target membrane protein cargos into vesicles assembled at cell bodies for delivery into neurites and nerve terminals. The BLOC-1 complex, in association with SNARE proteins, is also proposed to be involved in neurite extension. Associates with the BLOC-2 complex to facilitate the transport of TYRP1 independent of AP-3 function. Plays a role in synaptic vesicle trafficking and in neurotransmitter release. Plays a role in the regulation of cell surface exposure of DRD2. May play a role in actin cytoskeleton reorganization and neurite outgrowth. May modulate MAPK8 phosphorylation. Appears to promote neuronal transmission and viability through regulating the expression of SNAP25 and SYN1, modulating PI3-kinase-Akt signaling and influencing glutamatergic release. Regulates the expression of SYN1 through binding to its promoter. Modulates prefrontal cortical activity via the dopamine/D2 pathway. This is Dysbindin (DTNBP1) from Bos taurus (Bovine).